We begin with the raw amino-acid sequence, 243 residues long: Type III pantothenate kinase (243 aa).

7 to 14 (DIGNTRLK) lines the ATP pocket. Substrate contacts are provided by residues Y95 and 102-105 (GIDR). D104 acts as the Proton acceptor in catalysis. T126 is an ATP binding site. T177 lines the substrate pocket.

The protein belongs to the type III pantothenate kinase family. In terms of assembly, homodimer. NH4(+) is required as a cofactor. K(+) serves as cofactor.

The protein localises to the cytoplasm. It carries out the reaction (R)-pantothenate + ATP = (R)-4'-phosphopantothenate + ADP + H(+). Its pathway is cofactor biosynthesis; coenzyme A biosynthesis; CoA from (R)-pantothenate: step 1/5. Functionally, catalyzes the phosphorylation of pantothenate (Pan), the first step in CoA biosynthesis. This is Type III pantothenate kinase from Acinetobacter baylyi (strain ATCC 33305 / BD413 / ADP1).